The following is an 856-amino-acid chain: DNA mismatch repair protein MutS (856 aa).

Gly-617 to Ser-624 provides a ligand contact to ATP.

This sequence belongs to the DNA mismatch repair MutS family.

This protein is involved in the repair of mismatches in DNA. It is possible that it carries out the mismatch recognition step. This protein has a weak ATPase activity. In Psychromonas ingrahamii (strain DSM 17664 / CCUG 51855 / 37), this protein is DNA mismatch repair protein MutS.